The following is a 230-amino-acid chain: Cytidylate kinase (230 aa).

Position 10 to 18 (10 to 18) interacts with ATP; it reads GPAGSGKST.

This sequence belongs to the cytidylate kinase family. Type 1 subfamily.

The protein resides in the cytoplasm. The enzyme catalyses CMP + ATP = CDP + ADP. The catalysed reaction is dCMP + ATP = dCDP + ADP. This is Cytidylate kinase from Leptospira borgpetersenii serovar Hardjo-bovis (strain L550).